A 357-amino-acid chain; its full sequence is CRISPR system Cms protein Csm5 (357 aa).

Belongs to the CRISPR-associated Csm5 family. Part of the Csm effector complex that includes at least Cas10(1), Csm2(3), Csm3(5), Csm4(1), Csm5(1) and mature crRNA. The Csm complex is elongated and slightly twisted with a maximal length of 215 Angstroms and a diameter of 75-80 Angstroms. It has been modeled to have a central protein filamant of Csm3 subunits along which the dsRNA helix of paired crRNA and target RNA binds. The filament is capped at one end by Cas10 and Csm4 and at the other end by Csm5; ssDNA is thought to bind to the N-terminal HD domain of Cas10. Csm with a precursor crRNA does not include Csm5, while Cas6, the enzyme probably involved in pre-crRNA processing, is found associated with a subset of the Csm complex.

CRISPR (clustered regularly interspaced short palindromic repeat) is an adaptive immune system that provides protection against mobile genetic elements (viruses, transposable elements and conjugative plasmids). CRISPR clusters contain spacers, sequences complementary to antecedent mobile elements, and target invading nucleic acids. CRISPR clusters are transcribed and processed into CRISPR RNA (crRNA). The type III-A Csm effector complex binds crRNA and acts as a crRNA-guided RNase, DNase and cyclic oligoadenylate synthase; binding of target RNA cognate to the crRNA is required for all activities. In a heterologous host this Csm effector complex restricts ssRNA phage MS2, suggesting it may target RNA viruses in vivo. In terms of biological role, csm functions as a non-specific ssDNase. Base-pairing between crRNA and target RNA to form a ternary Csm complex activates a ssDNase activity; target RNA cleavage suppresses the ssDNase, a temporal control that prevents uncontrolled DNA degradation. Viral RNA transcripts probably tether the Csm complex to the viral genome, recruiting Cas10 ssDNA activity which is able to degrade DNA in the transcription bubble, spatially controlling the DNase activity. Functionally, this subunit might be involved in maturation of a crRNA intermediate to its mature form. In Streptococcus thermophilus, this protein is CRISPR system Cms protein Csm5.